We begin with the raw amino-acid sequence, 494 residues long: Glycerol kinase (494 aa).

Thr12 provides a ligand contact to ADP. ATP is bound by residues Thr12, Thr13, and Ser14. Thr12 contributes to the sn-glycerol 3-phosphate binding site. Arg16 lines the ADP pocket. Arg82, Glu83, Tyr134, and Asp244 together coordinate sn-glycerol 3-phosphate. Glycerol-binding residues include Arg82, Glu83, Tyr134, Asp244, and Gln245. Residues Thr266 and Gly309 each contribute to the ADP site. Residues Thr266, Gly309, Gln313, and Gly410 each coordinate ATP. Residues Gly410 and Asn414 each contribute to the ADP site.

This sequence belongs to the FGGY kinase family. Homotetramer and homodimer (in equilibrium).

The enzyme catalyses glycerol + ATP = sn-glycerol 3-phosphate + ADP + H(+). The protein operates within polyol metabolism; glycerol degradation via glycerol kinase pathway; sn-glycerol 3-phosphate from glycerol: step 1/1. Activated by phosphorylation and inhibited by fructose 1,6-bisphosphate (FBP). Key enzyme in the regulation of glycerol uptake and metabolism. Catalyzes the phosphorylation of glycerol to yield sn-glycerol 3-phosphate. In Desulfitobacterium hafniense (strain DSM 10664 / DCB-2), this protein is Glycerol kinase.